Consider the following 561-residue polypeptide: Putative cuticle collagen 145 (561 aa).

A signal peptide spans 1–30; sequence MEKILVTLSTGAASIAVLAVLFTIPSLYNT. Residues 100-112 show a composition bias toward pro residues; that stretch reads TCPPGPPGPPGQP. 4 disordered regions span residues 100-134, 148-271, 367-398, and 422-540; these read TCPP…TYAP, PQGP…PGGP, TCPP…NTAT, and TGPA…GPGL. Triple-helical region stretches follow at residues 102–127 and 153–276; these read PPGP…KGED and GPEG…LPGN. 2 stretches are compositionally biased toward low complexity: residues 164-209 and 219-265; these read AGPD…PGQD and APGA…DGQP. Pro residues predominate over residues 367–379; the sequence is TCPPGPPGPPGQP. The segment at 413 to 544 is triple-helical region; that stretch reads KCPQGPAGPT…PGGPGLPGND (132 aa). Low complexity-rich tracts occupy residues 422 to 467 and 486 to 532; these read TGPA…PGQD and APGA…DGQP. The Collagen-like domain maps to 485-543; it reads GAPGAPGNAGPAGPAGQDGFPGQDGQPGPAGPAGQDGFPGNAGSDGQPGAPGGPGLPGN.

It belongs to the cuticular collagen family. Collagen polypeptide chains are complexed within the cuticle by disulfide bonds and other types of covalent cross-links.

In terms of biological role, nematode cuticles are composed largely of collagen-like proteins. The cuticle functions both as an exoskeleton and as a barrier to protect the worm from its environment. In Caenorhabditis briggsae, this protein is Putative cuticle collagen 145.